Consider the following 285-residue polypeptide: 3-methyl-2-oxobutanoate hydroxymethyltransferase 1 (285 aa).

Mg(2+) is bound by residues Asp-49 and Asp-88. 3-methyl-2-oxobutanoate-binding positions include 49–50, Asp-88, and Lys-118; that span reads DS. Glu-120 serves as a coordination point for Mg(2+). The active-site Proton acceptor is the Glu-187.

The protein belongs to the PanB family. Homodecamer; pentamer of dimers. Requires Mg(2+) as cofactor.

The protein localises to the cytoplasm. The enzyme catalyses 3-methyl-2-oxobutanoate + (6R)-5,10-methylene-5,6,7,8-tetrahydrofolate + H2O = 2-dehydropantoate + (6S)-5,6,7,8-tetrahydrofolate. The protein operates within cofactor biosynthesis; (R)-pantothenate biosynthesis; (R)-pantoate from 3-methyl-2-oxobutanoate: step 1/2. Its function is as follows. Catalyzes the reversible reaction in which hydroxymethyl group from 5,10-methylenetetrahydrofolate is transferred onto alpha-ketoisovalerate to form ketopantoate. This is 3-methyl-2-oxobutanoate hydroxymethyltransferase 1 from Burkholderia lata (strain ATCC 17760 / DSM 23089 / LMG 22485 / NCIMB 9086 / R18194 / 383).